A 504-amino-acid polypeptide reads, in one-letter code: Anaerobic nitric oxide reductase transcription regulator NorR (504 aa).

Residue Asp57 is modified to 4-aspartylphosphate. The Sigma-54 factor interaction domain occupies 187 to 416 (MIGLSPGMTQ…LEHAIHRAVV (230 aa)). ATP-binding positions include 215–222 (GETGTGKE) and 278–287 (ADNGTLFLDE). The segment at residues 479-498 (WAACARMLETDVANLHRLAK) is a DNA-binding region (H-T-H motif).

It participates in nitrogen metabolism; nitric oxide reduction. In terms of biological role, required for the expression of anaerobic nitric oxide (NO) reductase, acts as a transcriptional activator for at least the norVW operon. Activation also requires sigma-54. The chain is Anaerobic nitric oxide reductase transcription regulator NorR from Escherichia coli O8 (strain IAI1).